A 221-amino-acid polypeptide reads, in one-letter code: Large ribosomal subunit protein uL4 (221 aa).

The interval 48–77 is disordered; the sequence is TASTKTRGEVSGGGRKPWIQKHTGRARQGS.

The protein belongs to the universal ribosomal protein uL4 family. In terms of assembly, part of the 50S ribosomal subunit.

Functionally, one of the primary rRNA binding proteins, this protein initially binds near the 5'-end of the 23S rRNA. It is important during the early stages of 50S assembly. It makes multiple contacts with different domains of the 23S rRNA in the assembled 50S subunit and ribosome. In terms of biological role, forms part of the polypeptide exit tunnel. The polypeptide is Large ribosomal subunit protein uL4 (Thermosipho africanus (strain TCF52B)).